A 1393-amino-acid chain; its full sequence is DNA-directed RNA polymerase subunit beta' (1393 aa).

Zn(2+) is bound by residues cysteine 70, cysteine 72, cysteine 85, and cysteine 88. Residues aspartate 461, aspartate 463, and aspartate 465 each coordinate Mg(2+). Zn(2+)-binding residues include cysteine 815, cysteine 889, cysteine 896, and cysteine 899.

It belongs to the RNA polymerase beta' chain family. In terms of assembly, the RNAP catalytic core consists of 2 alpha, 1 beta, 1 beta' and 1 omega subunit. When a sigma factor is associated with the core the holoenzyme is formed, which can initiate transcription. Mg(2+) is required as a cofactor. Zn(2+) serves as cofactor.

It carries out the reaction RNA(n) + a ribonucleoside 5'-triphosphate = RNA(n+1) + diphosphate. In terms of biological role, DNA-dependent RNA polymerase catalyzes the transcription of DNA into RNA using the four ribonucleoside triphosphates as substrates. In Vesicomyosocius okutanii subsp. Calyptogena okutanii (strain HA), this protein is DNA-directed RNA polymerase subunit beta'.